The sequence spans 531 residues: Phosphomethylpyrimidine synthase (531 aa).

Residues Asn167, Met196, Tyr225, His261, 281–283 (SRG), 322–325 (DALR), and Glu361 contribute to the substrate site. Residue His365 participates in Zn(2+) binding. Residue Tyr388 coordinates substrate. His429 provides a ligand contact to Zn(2+). Residues Cys511, Cys514, and Cys519 each contribute to the [4Fe-4S] cluster site.

It belongs to the ThiC family. [4Fe-4S] cluster is required as a cofactor.

The enzyme catalyses 5-amino-1-(5-phospho-beta-D-ribosyl)imidazole + S-adenosyl-L-methionine = 4-amino-2-methyl-5-(phosphooxymethyl)pyrimidine + CO + 5'-deoxyadenosine + formate + L-methionine + 3 H(+). The protein operates within cofactor biosynthesis; thiamine diphosphate biosynthesis. In terms of biological role, catalyzes the synthesis of the hydroxymethylpyrimidine phosphate (HMP-P) moiety of thiamine from aminoimidazole ribotide (AIR) in a radical S-adenosyl-L-methionine (SAM)-dependent reaction. The sequence is that of Phosphomethylpyrimidine synthase from Chlorobium chlorochromatii (strain CaD3).